We begin with the raw amino-acid sequence, 346 residues long: G-protein coupled receptor 42 (346 aa).

Residues 1–19 (MDTGPDQSYFSGNHWFVFS) are Extracellular-facing. The helical transmembrane segment at 20-40 (VYLLTFLVGLPLNLLALVVFV) threads the bilayer. Residues 41–47 (GKLRCRP) lie on the Cytoplasmic side of the membrane. A helical membrane pass occupies residues 48–68 (VAVDVLLLNLTASDLLLLLFL). Over 69–90 (PFRMVEAANGMHWPLPFILCPL) the chain is Extracellular. A helical transmembrane segment spans residues 91–111 (SGFIFFTTIYLTALFLAAVSI). Over 112–132 (ERFLSVAHPLWYKTRPRLGQA) the chain is Cytoplasmic. Residues 133-153 (GLVSVACWLLASAHCSVVYVI) form a helical membrane-spanning segment. The Extracellular segment spans residues 154–178 (EFSGDISHSQGTNGTCYLEFRKDQL). An N-linked (GlcNAc...) asparagine glycan is attached at Asn166. A helical transmembrane segment spans residues 179-199 (AILLPVRLEMAVVLFVVPLII). Residues 200–222 (TSYCYSRLVWILGRGGSHRRQRR) are Cytoplasmic-facing. Residues 223 to 243 (VAGLVAATLLNFLVCFGPYNV) form a helical membrane-spanning segment. At 244-258 (SHVVGYICGESPVWR) the chain is on the extracellular side. Residues 259 to 279 (IYVTLLSTLNSCVDPFVYYFS) form a helical membrane-spanning segment. The Cytoplasmic segment spans residues 280–346 (SSGFQADFHE…TGGQVACAEN (67 aa)). The segment covering 307–330 (MELKEQKGGEEQRADRPAERKTSE) has biased composition (basic and acidic residues). The tract at residues 307-346 (MELKEQKGGEEQRADRPAERKTSEHSQGCGTGGQVACAEN) is disordered.

Belongs to the G-protein coupled receptor 1 family.

The protein resides in the cell membrane. Its function is as follows. G protein-coupled receptor that is activated by short chain fatty acids (SCFAs), such as propionate. Hence may play a role in the regulation of whole-body energy homeostasis and/or in intestinal immunity. The chain is G-protein coupled receptor 42 (GPR42) from Homo sapiens (Human).